The sequence spans 238 residues: tRNA (guanine-N(7)-)-methyltransferase (238 aa).

S-adenosyl-L-methionine is bound by residues E68, E93, D120, and D143. D143 is a catalytic residue. Substrate is bound by residues K147, D179, and 216–219 (TKFE).

It belongs to the class I-like SAM-binding methyltransferase superfamily. TrmB family.

The enzyme catalyses guanosine(46) in tRNA + S-adenosyl-L-methionine = N(7)-methylguanosine(46) in tRNA + S-adenosyl-L-homocysteine. It participates in tRNA modification; N(7)-methylguanine-tRNA biosynthesis. In terms of biological role, catalyzes the formation of N(7)-methylguanine at position 46 (m7G46) in tRNA. The protein is tRNA (guanine-N(7)-)-methyltransferase of Shewanella putrefaciens (strain CN-32 / ATCC BAA-453).